Consider the following 363-residue polypeptide: Osmoprotective compounds uptake ATP-binding protein GgtA (363 aa).

An ABC transporter domain is found at 4–234 (VSFEQVTKQF…PANLFVAGFI (231 aa)). 36–43 (GPSGCGKT) serves as a coordination point for ATP.

It belongs to the ABC transporter superfamily. The complex is composed of two ATP-binding proteins (GgtA), two transmembrane proteins (GgtC and GgtD) and a solute-binding protein (GgtB).

The protein resides in the cell membrane. Functionally, part of the ABC transporter complex GgtABCD involved in the uptake of the osmoprotective compounds glucosylglycerol (GG), sucrose and trehalose. Responsible for energy coupling to the transport system. This chain is Osmoprotective compounds uptake ATP-binding protein GgtA, found in Synechocystis sp. (strain ATCC 27184 / PCC 6803 / Kazusa).